Consider the following 59-residue polypeptide: Dimethylamine corrinoid protein (59 aa).

The B12-binding domain maps to 1–59; sequence TLQGQKDVIELLKEEGLRDKIKVMVGGAPATQAWADKIGADCYAENASEAVAKAKELLA.

Belongs to the methylamine corrinoid protein family.

It participates in one-carbon metabolism; methanogenesis from dimethylamine. Acts as a methyl group carrier between MtbB and MtbA. In Methanosarcina thermophila, this protein is Dimethylamine corrinoid protein (mtbC).